Consider the following 40-residue polypeptide: Cytolysin SmT-1 (40 aa).

Positions 3 to 12 are plays an important role in the hemolytic activity; the sequence is ALAGTIIAGA. The N-terminal region stretch occupies residues 11-30; the sequence is GASLGFQILDKVLGELGKVS.

This sequence belongs to the actinoporin family. Sea anemone subfamily. As to quaternary structure, octamer or nonamer in membranes. Monomer in the soluble state.

The protein resides in the secreted. The protein localises to the nematocyst. Its subcellular location is the target cell membrane. In terms of biological role, pore-forming protein that forms cations-selective hydrophilic pores of around 1 nm and causes cardiac stimulation and cytolysis. Pore formation is a multi-step process that involves specific recognition of membrane sphingomyelin (but neither cholesterol nor phosphatidylcholine) using aromatic rich region and adjacent phosphocholine (POC) binding site, firm binding to the membrane (mainly driven by hydrophobic interactions) accompanied by the transfer of the N-terminal region to the lipid-water interface and finally pore formation after oligomerization of monomers. This toxin shows hemolytic activities. This chain is Cytolysin SmT-1, found in Stichodactyla mertensii (Merten's carpet sea anemone).